The chain runs to 250 residues: Probable transcriptional regulatory protein RHA1_ro06891 (250 aa).

This sequence belongs to the TACO1 family.

The protein resides in the cytoplasm. The protein is Probable transcriptional regulatory protein RHA1_ro06891 of Rhodococcus jostii (strain RHA1).